Consider the following 238-residue polypeptide: Probable transcriptional regulatory protein YeeN (238 aa).

This sequence belongs to the TACO1 family. YeeN subfamily.

The protein resides in the cytoplasm. The chain is Probable transcriptional regulatory protein YeeN from Salmonella typhi.